Here is a 1163-residue protein sequence, read N- to C-terminus: Reticulon-4 (1163 aa).

Position 1 is an N-acetylmethionine (Met1). Disordered stretches follow at residues 1–184 and 244–270; these read MEDI…AASE and SAVSSSEGTIEETLNEASKELPERATN. The Cytoplasmic portion of the chain corresponds to 1 to 989; the sequence is MEDIDQSSLV…LYWRDIKKTG (989 aa). Ser7 and Ser16 each carry phosphoserine. Over residues 7 to 16 the composition is skewed to low complexity; that stretch reads SSLVSSSTDS. Residues 31–55 show a composition bias toward acidic residues; it reads EPEDEEDEEEEEDEEEDDEDLEELE. Residues 62 to 79 show a composition bias toward low complexity; it reads AAGLSAAAVPPAAAAPLL. Pro residues predominate over residues 87–101; the sequence is PPAPRGPLPAAPPAA. Ser107 is subject to Phosphoserine. The segment covering 138–147 has biased composition (pro residues); it reads ARPPPPPPAG. 3 positions are modified to phosphoserine: Ser149, Ser169, and Ser171. Phosphoserine is present on residues Ser329, Ser333, and Ser343. Thr347 carries the post-translational modification Phosphothreonine. Over residues 406-423 the composition is skewed to basic and acidic residues; that stretch reads DSLEQKSLGKDSEGRNED. Disordered stretches follow at residues 406–437 and 454–474; these read DSLEQKSLGKDSEGRNEDASFPSTPEPVKDSS and TANTFPLLEDHTSENKTDEKK. Ser425 carries the post-translational modification Phosphoserine. Thr429 is subject to Phosphothreonine. The segment covering 461–474 has biased composition (basic and acidic residues); that stretch reads LEDHTSENKTDEKK. A phosphoserine mark is found at Ser488, Ser689, Ser726, Ser766, and Ser830. Residue Thr832 is modified to Phosphothreonine. Phosphoserine occurs at positions 855, 922, and 962. Residues 976 to 1163 form the Reticulon domain; it reads VVDLLYWRDI…KIPGLKRKAD (188 aa). Residues 990-1010 form a helical membrane-spanning segment; that stretch reads VVFGASLFLLLSLTVFSIVSV. At 1011 to 1104 the chain is on the lumenal side; sequence TAYIALALLS…LMWVFTYVGA (94 aa). N6-acetyllysine is present on Lys1075. A helical membrane pass occupies residues 1105 to 1125; the sequence is LFNGLTLLILALISLFSIPVI. The Cytoplasmic portion of the chain corresponds to 1126–1163; that stretch reads YERHQVQIDHYLGLANKSVKDAMAKIQAKIPGLKRKAD.

As to quaternary structure, binds to RTN4R. Interacts with ATL1. Interacts with TMEM170A. Interacts with RTN4IP1. In terms of assembly, interacts in trans with CNTNAP1. Interacts with REEP5. Interacts with synaptic plasticity regulator PANTS; the interaction results in enhanced RTN4-mediated inhibition of AMPA receptor clustering. Interacts with GPR50. Homodimer. Interacts with BAD/Bcl-xl and BCL2. Interact with RTN3. Interacts with NGBR. Interacts with SPTLC1. Interacts with GRAMD4. Interacts with CDH5. Interacts with BACE1 and BACE2. Interacts with REEP5. Interacts with RETREG3. As to quaternary structure, interacts with BACE1 and BACE2. Interacts with TMEM33. In terms of tissue distribution, isoforms A, B and C are present in optic nerve, spinal cord and cerebral cortex. Isoforms A and B are present in dorsal root ganglion, sciatic nerve and PC12 cells after longer exposure. Isoforms B and C are detected in kidney, cartilage, skin, lung and spleen. Isoform C is expressed at high level in skeletal muscle. In adult animals isoform A is expressed mainly in the nervous system.

It localises to the endoplasmic reticulum membrane. It is found in the cell membrane. The protein resides in the synapse. The protein localises to the cell junction. Required to induce the formation and stabilization of endoplasmic reticulum (ER) tubules. They regulate membrane morphogenesis in the ER by promoting tubular ER production. They influence nuclear envelope expansion, nuclear pore complex formation and proper localization of inner nuclear membrane proteins. However each isoform have specific functions mainly depending on their tissue expression specificities. In terms of biological role, developmental neurite growth regulatory factor with a role as a negative regulator of axon-axon adhesion and growth, and as a facilitator of neurite branching. Regulates neurite fasciculation, branching and extension in the developing nervous system. Involved in down-regulation of growth, stabilization of wiring and restriction of plasticity in the adult CNS. Regulates the radial migration of cortical neurons via an RTN4R-LINGO1 containing receptor complex. Acts as a negative regulator of central nervous system angiogenesis. Inhibits spreading, migration and sprouting of primary brain microvascular endothelial cells (MVECs). Also induces the retraction of MVECs lamellipodia and filopodia in a ROCK pathway-dependent manner. Functionally, mainly function in endothelial cells and vascular smooth muscle cells, is also involved in immune system regulation. Modulator of vascular remodeling, promotes the migration of endothelial cells but inhibits the migration of vascular smooth muscle cells. Regulates endothelial sphingolipid biosynthesis with direct effects on vascular function and blood pressure. Inhibits serine palmitoyltransferase, SPTLC1, the rate-limiting enzyme of the novo sphingolipid biosynthetic pathway, thereby controlling production of endothelial sphingosine-1-phosphate (S1P). Required to promote macrophage homing and functions such as cytokine/chemokine gene expression involved in angiogenesis, arteriogenesis and tissue repair. Mediates ICAM1 induced transendothelial migration of leukocytes such as monocytes and neutrophils and acute inflammation. Necessary for immune responses triggered by nucleic acid sensing TLRs, such as TLR9, is required for proper TLR9 location to endolysosomes. Also involved in immune response to LPS. Plays a role in liver regeneration through the modulation of hepatocytes proliferation. Reduces the anti-apoptotic activity of Bcl-xl and Bcl-2. This is likely consecutive to their change in subcellular location, from the mitochondria to the endoplasmic reticulum, after binding and sequestration. With isoform C, inhibits BACE1 activity and amyloid precursor protein processing. Its function is as follows. Regulates cardiomyocyte apoptosis upon hypoxic conditions. With isoform B, inhibits BACE1 activity and amyloid precursor protein processing. This is Reticulon-4 (Rtn4) from Rattus norvegicus (Rat).